The primary structure comprises 436 residues: Chromosomal replication initiator protein DnaA (436 aa).

A domain I, interacts with DnaA modulators region spans residues 1–69 (MLADEVLELL…AHLFEVKTGT (69 aa)). Positions 69–99 (TKPNVEITTQTKLKSSKQNQVNIKQIKAQST) are domain II. The tract at residues 100-314 (LLNPAYTFEN…SAIINLNAYA (215 aa)) is domain III, AAA+ region. Gly144, Gly146, Lys147, and Thr148 together coordinate ATP. A domain IV, binds dsDNA region spans residues 315 to 436 (NLMRQEITLD…ELKNKILTKG (122 aa)).

This sequence belongs to the DnaA family. Oligomerizes as a right-handed, spiral filament on DNA at oriC.

It localises to the cytoplasm. Its function is as follows. Plays an essential role in the initiation and regulation of chromosomal replication. ATP-DnaA binds to the origin of replication (oriC) to initiate formation of the DNA replication initiation complex once per cell cycle. Binds the DnaA box (a 9 base pair repeat at the origin) and separates the double-stranded (ds)DNA. Forms a right-handed helical filament on oriC DNA; dsDNA binds to the exterior of the filament while single-stranded (ss)DNA is stabiized in the filament's interior. The ATP-DnaA-oriC complex binds and stabilizes one strand of the AT-rich DNA unwinding element (DUE), permitting loading of DNA polymerase. After initiation quickly degrades to an ADP-DnaA complex that is not apt for DNA replication. Binds acidic phospholipids. The polypeptide is Chromosomal replication initiator protein DnaA (Campylobacter curvus (strain 525.92)).